A 345-amino-acid polypeptide reads, in one-letter code: MSTPTPLSYKDAGVDIDAGNALVSNIKAAVKRTRRPEVMGNLGGFGALCELPTKYKQPVLVSGTDGVGTKLRLAIDYKKHDTVGIDLVAMCVNDLIVQGAEPLFFLDYYATGKLDVETATSVVNGIGEGCFQSGCALIGGETAEMPGMYEGEDYDLAGFCVGVVEKADIIDGSKVAAGDALIALASSGPHSNGYSLVRKVLEVSQADPQQDLNGKPLIQHLLEPTKIYVKSLLKLIEASDVHAMAHITGGGFWENIPRVLPENCKAVIQGDSWQWPAVFNWLMENGNIAEYEMYRTFNCGVGMIVALPADKVDAALALLAAEGEQAWLIGAIAAREGNEEQVEIL.

The protein belongs to the AIR synthase family.

The protein localises to the cytoplasm. It catalyses the reaction 2-formamido-N(1)-(5-O-phospho-beta-D-ribosyl)acetamidine + ATP = 5-amino-1-(5-phospho-beta-D-ribosyl)imidazole + ADP + phosphate + H(+). Its pathway is purine metabolism; IMP biosynthesis via de novo pathway; 5-amino-1-(5-phospho-D-ribosyl)imidazole from N(2)-formyl-N(1)-(5-phospho-D-ribosyl)glycinamide: step 2/2. The protein is Phosphoribosylformylglycinamidine cyclo-ligase of Shewanella sp. (strain ANA-3).